Here is a 628-residue protein sequence, read N- to C-terminus: Chaperone protein HtpG (628 aa).

The tract at residues 1 to 337 (MSEKKYTFET…SADLPLNVSR (337 aa)) is a; substrate-binding. The tract at residues 338 to 554 (EILQHNKVID…DYGMSLHMQK (217 aa)) is b. The interval 555–628 (MMEEAGQGFM…FVKLVNKYIR (74 aa)) is c.

It belongs to the heat shock protein 90 family. In terms of assembly, homodimer.

It is found in the cytoplasm. In terms of biological role, molecular chaperone. Has ATPase activity. In Francisella tularensis subsp. novicida (strain U112), this protein is Chaperone protein HtpG.